Consider the following 245-residue polypeptide: rRNA adenine N-6-methyltransferase (245 aa).

Residues N10, L12, G37, E58, D83, and S100 each coordinate S-adenosyl-L-methionine.

Belongs to the class I-like SAM-binding methyltransferase superfamily. rRNA adenine N(6)-methyltransferase family.

It catalyses the reaction adenosine(2085) in 23S rRNA + 2 S-adenosyl-L-methionine = N(6)-dimethyladenosine(2085) in 23S rRNA + 2 S-adenosyl-L-homocysteine + 2 H(+). In terms of biological role, this protein produces a dimethylation of the adenine residue at position 2085 in 23S rRNA, resulting in reduced affinity between ribosomes and macrolide-lincosamide-streptogramin B antibiotics. The sequence is that of rRNA adenine N-6-methyltransferase (ermBP) from Clostridium perfringens.